Consider the following 37-residue polypeptide: Cytochrome b6-f complex subunit 5 (37 aa).

The chain crosses the membrane as a helical span at residues 5 to 25 (LLSGIVLGLVPVTIAGLFVTA).

Belongs to the PetG family. In terms of assembly, the 4 large subunits of the cytochrome b6-f complex are cytochrome b6, subunit IV (17 kDa polypeptide, PetD), cytochrome f and the Rieske protein, while the 4 small subunits are PetG, PetL, PetM and PetN. The complex functions as a dimer.

The protein localises to the plastid. The protein resides in the chloroplast thylakoid membrane. Functionally, component of the cytochrome b6-f complex, which mediates electron transfer between photosystem II (PSII) and photosystem I (PSI), cyclic electron flow around PSI, and state transitions. PetG is required for either the stability or assembly of the cytochrome b6-f complex. The sequence is that of Cytochrome b6-f complex subunit 5 from Chlamydomonas moewusii (Chlamydomonas eugametos).